We begin with the raw amino-acid sequence, 447 residues long: uncharacterized protein (447 aa).

Residues C87, C93, C96, and C162 each contribute to the [4Fe-4S] cluster site. 4 residues coordinate S-adenosyl-L-methionine: Q284, Y313, E334, and D375. Residue C402 is the Nucleophile of the active site.

Belongs to the class I-like SAM-binding methyltransferase superfamily. RNA M5U methyltransferase family.

This is an uncharacterized protein from Nanoarchaeum equitans (strain Kin4-M).